Reading from the N-terminus, the 31-residue chain is Cytolysin Oshem 2 (31 aa).

The protein localises to the secreted. Its subcellular location is the nematocyst. It is found in the target cell membrane. In terms of biological role, cytolysin that shows weak hemolysis and weak myonecrosis. This is Cytolysin Oshem 2 from Olindias sambaquiensis (Hydromedusa).